We begin with the raw amino-acid sequence, 227 residues long: Cytidylate kinase (227 aa).

An ATP-binding site is contributed by 12–20 (GPSGAGKGT).

The protein belongs to the cytidylate kinase family. Type 1 subfamily.

It localises to the cytoplasm. The catalysed reaction is CMP + ATP = CDP + ADP. The enzyme catalyses dCMP + ATP = dCDP + ADP. The chain is Cytidylate kinase from Salmonella typhimurium (strain LT2 / SGSC1412 / ATCC 700720).